Reading from the N-terminus, the 426-residue chain is Adenylosuccinate synthetase (426 aa).

GTP is bound by residues 12–18 and 40–42; these read GDEGKGK and GHT. Asp13 serves as the catalytic Proton acceptor. Mg(2+) contacts are provided by Asp13 and Gly40. Residues 13–16, 38–41, Thr131, Arg145, Gln226, Thr241, and Arg305 contribute to the IMP site; these read DEGK and NAGH. Residue His41 is the Proton donor of the active site. Residue 301–307 participates in substrate binding; sequence ATTGRKR. Residues Arg307, 333 to 335, and 415 to 417 contribute to the GTP site; these read KLD and SVG.

It belongs to the adenylosuccinate synthetase family. As to quaternary structure, homodimer. The cofactor is Mg(2+).

It localises to the cytoplasm. It carries out the reaction IMP + L-aspartate + GTP = N(6)-(1,2-dicarboxyethyl)-AMP + GDP + phosphate + 2 H(+). Its pathway is purine metabolism; AMP biosynthesis via de novo pathway; AMP from IMP: step 1/2. Plays an important role in the de novo pathway of purine nucleotide biosynthesis. Catalyzes the first committed step in the biosynthesis of AMP from IMP. The sequence is that of Adenylosuccinate synthetase from Nitratidesulfovibrio vulgaris (strain DP4) (Desulfovibrio vulgaris).